The sequence spans 334 residues: MSGFYHKHFLKLLDFTPAELNSLLQLAAKLKADKKSGKEEAKLTGKNIALIFEKDSTRTRCSFEVAAYDQGARVTYLGPSGSQIGHKESIKDTARVLGRMYDGIQYRGYGQEIVETLAEYAGVPVWNGLTNEFHPTQLLADLLTMQEHLPGKAFNEMTLVYAGDARNNMGNSMLEAAALTGLDLRLVAPQACWPEAALVTECRALAQQNGGNITLTEDVAKGVEGADFIYTDVWVSMGEAKEKWAERIALLRDYQVNSKMMQLTGNPEVKFLHCLPAFHDDQTTLGKKMAEEFGLHGGMEVTDEVFESAASIVFDQAENRMHTIKAVMVATLSK.

Residues 56–59, glutamine 83, arginine 107, and 134–137 contribute to the carbamoyl phosphate site; these read STRT and HPTQ. Residues asparagine 168, aspartate 232, and 236–237 contribute to the L-ornithine site; that span reads SM. Residues 274–275 and arginine 320 contribute to the carbamoyl phosphate site; that span reads CL.

This sequence belongs to the aspartate/ornithine carbamoyltransferase superfamily. OTCase family.

The protein localises to the cytoplasm. The enzyme catalyses carbamoyl phosphate + L-ornithine = L-citrulline + phosphate + H(+). The protein operates within amino-acid biosynthesis; L-arginine biosynthesis; L-arginine from L-ornithine and carbamoyl phosphate: step 1/3. Reversibly catalyzes the transfer of the carbamoyl group from carbamoyl phosphate (CP) to the N(epsilon) atom of ornithine (ORN) to produce L-citrulline. In Escherichia coli (strain 55989 / EAEC), this protein is Ornithine carbamoyltransferase.